A 664-amino-acid chain; its full sequence is Translation factor guf1, mitochondrial (664 aa).

The transit peptide at methionine 1–alanine 43 directs the protein to the mitochondrion. A tr-type G domain is found at glutamate 66 to isoleucine 246. Residues alanine 75 to serine 82, aspartate 139 to histidine 143, and asparagine 193 to aspartate 196 each bind GTP.

This sequence belongs to the TRAFAC class translation factor GTPase superfamily. Classic translation factor GTPase family. LepA subfamily.

It is found in the mitochondrion inner membrane. The enzyme catalyses GTP + H2O = GDP + phosphate + H(+). Its function is as follows. Promotes mitochondrial protein synthesis. May act as a fidelity factor of the translation reaction, by catalyzing a one-codon backward translocation of tRNAs on improperly translocated ribosomes. Binds to mitochondrial ribosomes in a GTP-dependent manner. This is Translation factor guf1, mitochondrial (guf1) from Aspergillus clavatus (strain ATCC 1007 / CBS 513.65 / DSM 816 / NCTC 3887 / NRRL 1 / QM 1276 / 107).